The chain runs to 150 residues: Large ribosomal subunit protein bL9 (150 aa).

Belongs to the bacterial ribosomal protein bL9 family.

Binds to the 23S rRNA. The sequence is that of Large ribosomal subunit protein bL9 from Ralstonia nicotianae (strain ATCC BAA-1114 / GMI1000) (Ralstonia solanacearum).